Consider the following 34-residue polypeptide: Non-cysteinic peptide Bs 10 (34 aa).

Positions 1–34 (VTMGYIKDGDGKKIAKKKNKNGRKHVEIDLNKVG) are disordered. A compositionally biased stretch (basic residues) spans 14 to 23 (IAKKKNKNGR). The span at 24–34 (KHVEIDLNKVG) shows a compositional bias: basic and acidic residues.

In terms of tissue distribution, expressed by the venom gland.

The protein resides in the secreted. The protein is Non-cysteinic peptide Bs 10 of Hottentotta tamulus sindicus (Scorpion).